The chain runs to 417 residues: DnaJ protein homolog ANJ1 (417 aa).

A J domain is found at 11–76 (STRYYEILGV…REIYDQYGED (66 aa)). The segment at 135 to 219 (GTTKKLSLSR…CKGEKVVQEK (85 aa)) adopts a CR-type zinc-finger fold. 3 CXXCXGXG motif repeats span residues 148-155 (CSKCTGKG), 164-171 (CSGCQGTG), and 191-198 (CNECKGTG). One copy of the CXXCXGXG motif; approximate repeat lies at 207-214 (CPQCKGEK). Residues 384–417 (IEEEMKRKQTQAQQEAYDEDDEPAGGQRVQCAQQ) form a disordered region. Cys414 is subject to Cysteine methyl ester. Cys414 is lipidated: S-farnesyl cysteine. Positions 415-417 (AQQ) are cleaved as a propeptide — removed in mature form.

It localises to the membrane. Its function is as follows. Plays a continuous role in plant development probably in the structural organization of compartments. This is DnaJ protein homolog ANJ1 from Atriplex nummularia (Old man saltbush).